Consider the following 180-residue polypeptide: MTLKELLVGFGTQVRSIWMIGLHAFAKRETRMYPEEPVYLPPRYRGRIVLTRDPDGEERCVACNLCAVACPVGCISLQKAETKDGRWYPEFFRINFSRCIFCGLCEEACPTTAIQLTPDFEMGEYKRQDLVYEKEDLLISGPGKYPEYNFYRMAGMAIDGKDKGEAENEAKPIDVKSLLP.

2 4Fe-4S ferredoxin-type domains span residues Leu-50–Ala-80 and Glu-90–Asp-119. Cys-60, Cys-63, Cys-66, Cys-70, Cys-99, Cys-102, Cys-105, and Cys-109 together coordinate [4Fe-4S] cluster.

The protein belongs to the complex I 23 kDa subunit family. As to quaternary structure, NDH-1 is composed of 13 different subunits. Subunits NuoA, H, J, K, L, M, N constitute the membrane sector of the complex. Requires [4Fe-4S] cluster as cofactor.

The protein localises to the cell inner membrane. The catalysed reaction is a quinone + NADH + 5 H(+)(in) = a quinol + NAD(+) + 4 H(+)(out). In terms of biological role, NDH-1 shuttles electrons from NADH, via FMN and iron-sulfur (Fe-S) centers, to quinones in the respiratory chain. The immediate electron acceptor for the enzyme in this species is believed to be ubiquinone. Couples the redox reaction to proton translocation (for every two electrons transferred, four hydrogen ions are translocated across the cytoplasmic membrane), and thus conserves the redox energy in a proton gradient. The chain is NADH-quinone oxidoreductase subunit I from Shigella boydii serotype 4 (strain Sb227).